The following is a 369-amino-acid chain: MSKVSKTAMPAGAGRGAAKKELPEHFKSYKHVWVFVELERGQVHPVSWELMGTGRGLADRLKVNLAAVVVGPEGQHTRNAALEAFCYGADLAYLVSDNVLSDYRNESYTKALTELVNTYKPEILLLGATTLGRDLAGSVATNLSTGLTADCTTLDVDADGSLAATRPTFGGSLLCTIYTLNYRPQMATVRPRVMPMPARVMRDAARIVVHPLGLVEDDIVTKVLSFLPDRDAETSTLAYADVVVAGGLGLGSPENFRLVRELAALLGAEYGCSRPLVQKGWVTSDRQIGQTGKTIRPKLYIAAGISGAIQHRVGVEGADLIVAVNTDKNAPIFDFAHLAIVSDAMQLLPALTAAFRARLLPDSRARIAV.

Residue 299–327 (LYIAAGISGAIQHRVGVEGADLIVAVNTD) coordinates FAD.

Belongs to the ETF alpha-subunit/FixB family. In terms of assembly, fixA and FixB form a heterodimer.

In terms of biological role, may play a role in a redox process involved in nitrogen fixation. In Bradyrhizobium diazoefficiens (strain JCM 10833 / BCRC 13528 / IAM 13628 / NBRC 14792 / USDA 110), this protein is Protein FixB (fixB).